We begin with the raw amino-acid sequence, 182 residues long: Plasmolipin (182 aa).

The tract at residues 1-20 (MAEFPSKVNTRTSSPAQGGG) is disordered. Residues 1 to 35 (MAEFPSKVNTRTSSPAQGGGAVVSTLSPDLGFVRS) are Cytoplasmic-facing. Residues 7–16 (KVNTRTSSPA) are compositionally biased toward polar residues. The region spanning 32–166 (FVRSSLGALM…SAFLSFQAWR (135 aa)) is the MARVEL domain. Residues 36–56 (SLGALMLLQLVLGLLVWALIA) traverse the membrane as a helical segment. At 57–68 (DTPYHLYPSYGW) the chain is on the extracellular side. The chain crosses the membrane as a helical span at residues 69 to 89 (VMFVAVFLWLVTIIFFVLYLF). At 90–99 (QLHMKLYMVP) the chain is on the cytoplasmic side. The chain crosses the membrane as a helical span at residues 100–120 (WPLVLMVFNVGATVLYITAFI). The Extracellular segment spans residues 121–141 (TCSASVELTSLKGSQPYNQRA). A helical membrane pass occupies residues 142-162 (AASFFSCLVMIAYGVSAFLSF). The Cytoplasmic segment spans residues 163 to 182 (QAWRGVGSNAATSQMAGGYA).

Belongs to the MAL family. As to quaternary structure, forms oligomers. Phosphorylated.

The protein localises to the cell membrane. The protein resides in the myelin membrane. It is found in the apical cell membrane. Functionally, main component of the myelin sheath that plays an important role in myelin membrane biogenesis and myelination. Plays an essential function in apical endocytosis. Regulates epithelial development through the regulation of apical endocytosis. Part of the intracellular machinery that mediates basolateral-to-apical transport of ICAM-1, an essential adhesion receptor in epithelial cells, from the subapical compartment in hepatic epithelial cells. In Bos taurus (Bovine), this protein is Plasmolipin (PLLP).